The primary structure comprises 546 residues: Chaperonin GroEL (546 aa).

ATP contacts are provided by residues 30–33, lysine 51, 87–91, glycine 415, 479–481, and aspartate 495; these read TLGP, DGTTT, and NAA. The tract at residues 526–546 is disordered; sequence KKDEPAMPAGGGMGGMGGMDF. Residues 534–546 show a composition bias toward gly residues; that stretch reads AGGGMGGMGGMDF.

Belongs to the chaperonin (HSP60) family. As to quaternary structure, forms a cylinder of 14 subunits composed of two heptameric rings stacked back-to-back. Interacts with the co-chaperonin GroES.

It localises to the cytoplasm. It carries out the reaction ATP + H2O + a folded polypeptide = ADP + phosphate + an unfolded polypeptide.. Functionally, together with its co-chaperonin GroES, plays an essential role in assisting protein folding. The GroEL-GroES system forms a nano-cage that allows encapsulation of the non-native substrate proteins and provides a physical environment optimized to promote and accelerate protein folding. This chain is Chaperonin GroEL, found in Xanthomonas oryzae pv. oryzae (strain MAFF 311018).